The chain runs to 454 residues: PC-esterase domain-containing protein 1A (454 aa).

Belongs to the PC-esterase family.

This is PC-esterase domain-containing protein 1A (PCED1A) from Homo sapiens (Human).